A 558-amino-acid polypeptide reads, in one-letter code: Phosphatidylserine lipase ABHD16A (558 aa).

Transmembrane regions (helical) follow at residues 60–80 and 93–113; these read ILALASVFWSISYYSSPFAFF and VVPFSHYAGTLLLLLAGVACL. At 114–558 the chain is on the cytoplasmic side; that stretch reads RGIGRWTNPQ…AQNFQMPWHL (445 aa). One can recognise an AB hydrolase-1 domain in the interval 281 to 407; sequence LVICCEGNAG…LVTRTVRQHL (127 aa). Residues S355, D430, and H507 each act as charge relay system in the active site.

The protein belongs to the AB hydrolase superfamily. ABHD16 family.

Its subcellular location is the membrane. The catalysed reaction is 1-heptadecanoyl-2-(5Z,8Z,11Z,14Z-eicosatetraenoyl)-sn-glycero-3-phosphoserine + H2O = 1-heptadecanoyl-sn-glycero-3-phosphoserine + (5Z,8Z,11Z,14Z)-eicosatetraenoate + H(+). It carries out the reaction 1-hexadecanoyl-2-(9Z-octadecenoyl)-sn-glycero-3-phospho-L-serine + H2O = 1-hexadecanoyl-sn-glycero-3-phospho-L-serine + (9Z)-octadecenoate + H(+). The enzyme catalyses 1-octadecanoyl-2-(9Z,12Z-octadecadienoyl)-sn-glycero-3-phosphoserine + H2O = 1-octadecanoyl-sn-glycero-3-phosphoserine + (9Z,12Z)-octadecadienoate + H(+). It catalyses the reaction 1-heptadecanoyl-2-(5Z,8Z,11Z,14Z-eicosatetraenoyl)-sn-glycero-3-phosphocholine + H2O = 1-heptadecanoyl-sn-glycero-3-phosphocholine + (5Z,8Z,11Z,14Z)-eicosatetraenoate + H(+). The catalysed reaction is 1-hexadecanoyl-2-(9Z-octadecenoyl)-sn-glycero-3-phosphoglycerol + H2O = 1-hexadecanoyl-sn-glycero-3-phosphoglycerol + (9Z)-octadecenoate + H(+). It carries out the reaction 1-hexadecanoyl-2-(9Z-octadecenoyl)-sn-glycero-3-phospho-(1D-myo-inositol) + H2O = 1-hexadecanoyl-sn-glycero-3-phospho-(1D-myo-inositol) + (9Z)-octadecenoate + H(+). The enzyme catalyses 1-heptadecanoyl-2-(5Z,8Z,11Z,14Z-eicosatetraenoyl)-sn-glycero-3-phosphoethanolamine + H2O = 1-heptadecanoyl-sn-glycero-3-phosphoethanolamine + (5Z,8Z,11Z,14Z)-eicosatetraenoate + H(+). It catalyses the reaction 1-hexadecanoyl-2-(9Z-octadecenoyl)-sn-glycero-3-phospho-(1'-sn-glycerol) + H2O = 1-hexadecanoyl-sn-glycero-3-phospho-(1'-sn-glycerol) + (9Z)-octadecenoate + H(+). The catalysed reaction is Hydrolyzes glycerol monoesters of long-chain fatty acids.. It carries out the reaction 1-tetradecanoylglycerol + H2O = tetradecanoate + glycerol + H(+). The enzyme catalyses 2-hexadecanoylglycerol + H2O = glycerol + hexadecanoate + H(+). It catalyses the reaction 1-(9Z-octadecenoyl)-glycerol + H2O = glycerol + (9Z)-octadecenoate + H(+). The catalysed reaction is 2-(9Z-octadecenoyl)-glycerol + H2O = glycerol + (9Z)-octadecenoate + H(+). It carries out the reaction 2-(9Z,12Z-octadecadienoyl)-glycerol + H2O = (9Z,12Z)-octadecadienoate + glycerol + H(+). The enzyme catalyses 1-(5Z,8Z,11Z,14Z-eicosatetraenoyl)-glycerol + H2O = glycerol + (5Z,8Z,11Z,14Z)-eicosatetraenoate + H(+). It catalyses the reaction 2-(5Z,8Z,11Z,14Z-eicosatetraenoyl)-glycerol + H2O = glycerol + (5Z,8Z,11Z,14Z)-eicosatetraenoate + H(+). The catalysed reaction is prostaglandin D2-1-glycerol ester + H2O = prostaglandin D2 + glycerol + H(+). It carries out the reaction 2-glyceryl-15-deoxy-Delta(12,14)-prostaglandin J2 + H2O = 15-deoxy-Delta(12,14)-prostaglandin J2 + glycerol + H(+). The enzyme catalyses 1-(9Z,12Z-octadecadienoyl)-glycerol + H2O = (9Z,12Z)-octadecadienoate + glycerol + H(+). Functionally, phosphatidylserine (PS) lipase that mediates the hydrolysis of phosphatidylserine to generate lysophosphatidylserine (LPS). LPS constitutes a class of signaling lipids that regulates immunological and neurological processes. Has no activity towards diacylglycerol, triacylglycerol or lysophosphatidylserine lipase. Also has monoacylglycerol lipase activity, with preference for 1-(9Z,12Z-octadecadienoyl)-glycerol (1-LG) and 2-glyceryl-15-deoxy-Delta(12,14)-prostaglandin J2 (15d-PGJ(2)-G). The chain is Phosphatidylserine lipase ABHD16A from Pongo abelii (Sumatran orangutan).